The chain runs to 335 residues: MIKVGVVGASGYTGLELVKMLITHPGFELTYLATTQGDTTIEALHPSLEGVVTLEVEKADVNAVADACELVFLALPHKASMGFAKGLIEKGVKVVDLSADYRLELDTYEAHYCEHEDKEHLDESVYALIEYYREELKEAELAAGPGCYPTATLLGILPFIPYIDTSAPLFVDAKSGVSGAGKKLSETTHFVTVNDNIFAYNPLKHRHAPEIAEKIEKVHGAKMNVNFVPHLIPATRGELVSVYATLKEDIDPLEVLRKHYANDRFIRIREKPVDIKSTAGTHFCDIYAAKNGHALFVSSAIDNLLRGASSQALAAANLMCGYDEGMGLPVIPYMP.

The active site involves C147.

The protein belongs to the NAGSA dehydrogenase family. Type 1 subfamily.

The protein resides in the cytoplasm. It catalyses the reaction N-acetyl-L-glutamate 5-semialdehyde + phosphate + NADP(+) = N-acetyl-L-glutamyl 5-phosphate + NADPH + H(+). It participates in amino-acid biosynthesis; L-arginine biosynthesis; N(2)-acetyl-L-ornithine from L-glutamate: step 3/4. Its function is as follows. Catalyzes the NADPH-dependent reduction of N-acetyl-5-glutamyl phosphate to yield N-acetyl-L-glutamate 5-semialdehyde. The polypeptide is N-acetyl-gamma-glutamyl-phosphate reductase (Sulfurovum sp. (strain NBC37-1)).